Consider the following 303-residue polypeptide: GTPase Era (303 aa).

One can recognise an Era-type G domain in the interval 7-174 (KSGFVAILGR…IDTLSEKLDE (168 aa)). Residues 15 to 22 (GRPNVGKS) form a G1 region. Position 15-22 (15-22 (GRPNVGKS)) interacts with GTP. The tract at residues 41-45 (QTTRN) is G2. Residues 62–65 (DTPG) form a G3 region. GTP is bound by residues 62-66 (DTPGI) and 124-127 (NKID). The interval 124 to 127 (NKID) is G4. The tract at residues 153-155 (ISA) is G5. The region spanning 205–283 (TREEVPHSIA…YLETWVKIKN (79 aa)) is the KH type-2 domain.

The protein belongs to the TRAFAC class TrmE-Era-EngA-EngB-Septin-like GTPase superfamily. Era GTPase family. Monomer.

The protein localises to the cytoplasm. It localises to the cell membrane. Functionally, an essential GTPase that binds both GDP and GTP, with rapid nucleotide exchange. Plays a role in 16S rRNA processing and 30S ribosomal subunit biogenesis and possibly also in cell cycle regulation and energy metabolism. This chain is GTPase Era, found in Lactococcus lactis subsp. lactis (strain IL1403) (Streptococcus lactis).